Consider the following 1522-residue polypeptide: Lysophospholipase NTE1 (1522 aa).

Topologically, residues 1 to 73 (MVDGTYVNSS…SLLVYLINGT (73 aa)) are lumenal. Residues 74–94 (VPFYLVVLGSVFTPIIVYLIL) form a helical membrane-spanning segment. The Cytoplasmic portion of the chain corresponds to 95–1522 (RSRVLSAYSR…IHLLHRRNSI (1428 aa)). 3 disordered regions span residues 443–468 (SVQE…TPNK), 485–523 (DLLS…ASSP), and 535–556 (SQNF…PSVV). Composition is skewed to low complexity over residues 498–511 (KTAS…PRIS) and 540–555 (PLSS…KPSV). Residues 661-782 (PINV…LTKL) and 778-918 (TLTK…VAHK) each bind a nucleoside 3',5'-cyclic phosphate. Disordered regions lie at residues 828–852 (QKSK…DNQP) and 1125–1145 (SSQN…GAPP). The PNPLA domain occupies 1219 to 1383 (LVLGGGGARG…LDNLPVLEMK (165 aa)). Residues 1223–1228 (GGGARG) carry the GXGXXG motif. The GXSXG signature appears at 1250–1254 (GTSIG). The Nucleophile role is filled by S1252. D1370 acts as the Proton acceptor in catalysis. The short motif at 1370 to 1372 (DGG) is the DGA/G element.

Belongs to the NTE family.

The protein resides in the endoplasmic reticulum membrane. It catalyses the reaction a 1-acyl-sn-glycero-3-phosphocholine + H2O = sn-glycerol 3-phosphocholine + a fatty acid + H(+). Inhibited by organophosphorus esters. Functionally, intracellular phospholipase B that catalyzes the double deacylation of phosphatidylcholine (PC) to glycerophosphocholine (GroPCho). Plays an important role in membrane lipid homeostasis. Responsible for the rapid PC turnover in response to inositol, elevated temperatures, or when choline is present in the growth medium. This is Lysophospholipase NTE1 (NTE1) from Eremothecium gossypii (strain ATCC 10895 / CBS 109.51 / FGSC 9923 / NRRL Y-1056) (Yeast).